The chain runs to 152 residues: Aspartate carbamoyltransferase regulatory chain (152 aa).

Zn(2+) is bound by residues Cys-108, Cys-113, Cys-137, and Cys-140.

The protein belongs to the PyrI family. As to quaternary structure, contains catalytic and regulatory chains. Requires Zn(2+) as cofactor.

Functionally, involved in allosteric regulation of aspartate carbamoyltransferase. This Neisseria meningitidis serogroup B (strain ATCC BAA-335 / MC58) protein is Aspartate carbamoyltransferase regulatory chain.